We begin with the raw amino-acid sequence, 388 residues long: MKNREYQQIDPQALATPTPTPPPRSLPEHKPRRARRKWEVFPGKNRFYCDGRIIVARQSGVLPLTLGLILLTSGLFFIFDCPFLVKHLTSCIPAIGGVLFVFVIISLLQTSFTDPGILPRATPEEAADIEKQIDNPTGSSSSYRPPPRTKEVVINQQVVKLKYCFTCKIFRPPRTSHCSLCDNCVERFDHHCPWVGNCVGKRNYRFFYTFIVSLSFLTAFIFGCVTTHLALRSQGGNGLVNALQSSPASALELVVCFFSVWSILGLSGFHTYLVAANLTTNEDIKGSWSGKSGNEDVGNPYSYNSMIKNCCSVLCGPMPPSLIDRRGFVPSDDSVQTSPVEIELPAAKNDINMVGRAVTSGRPPPPPPPPLVVTLQQPAISMQNHSTA.

Residues 1-33 (MKNREYQQIDPQALATPTPTPPPRSLPEHKPRR) form a disordered region. Residues 1 to 58 (MKNREYQQIDPQALATPTPTPPPRSLPEHKPRRARRKWEVFPGKNRFYCDGRIIVARQ) lie on the Cytoplasmic side of the membrane. Residues 59 to 79 (SGVLPLTLGLILLTSGLFFIF) traverse the membrane as a helical segment. At 80 to 87 (DCPFLVKH) the chain is on the lumenal side. Residues 88 to 108 (LTSCIPAIGGVLFVFVIISLL) traverse the membrane as a helical segment. Topologically, residues 109–205 (QTSFTDPGIL…GNCVGKRNYR (97 aa)) are cytoplasmic. Residues 162–212 (KYCFTCKIFRPPRTSHCSLCDNCVERFDHHCPWVGNCVGKRNYRFFYTFIV) enclose the DHHC domain. Catalysis depends on Cys192, which acts as the S-palmitoyl cysteine intermediate. A helical membrane pass occupies residues 206-226 (FFYTFIVSLSFLTAFIFGCVT). Over 227 to 253 (THLALRSQGGNGLVNALQSSPASALEL) the chain is Lumenal. A helical transmembrane segment spans residues 254-274 (VVCFFSVWSILGLSGFHTYLV). The Cytoplasmic portion of the chain corresponds to 275–388 (AANLTTNEDI…AISMQNHSTA (114 aa)).

It belongs to the DHHC palmitoyltransferase family. ERF2/ZDHHC9 subfamily.

Its subcellular location is the golgi apparatus membrane. The enzyme catalyses L-cysteinyl-[protein] + hexadecanoyl-CoA = S-hexadecanoyl-L-cysteinyl-[protein] + CoA. Functionally, palmitoyltransferase that catalyzes the addition of palmitate onto various protein substrates, such as CGAS, HRAS and LCK. The sequence is that of Palmitoyltransferase ZDHHC18-B from Danio rerio (Zebrafish).